A 367-amino-acid chain; its full sequence is MKEPLDLSKYSVRTDLAVEAHQMLQERQEEQKGIQGVIVKEREEEGVTITKVTIDEIASESMGKKPGSYLTLEVQGIRQQDTELQQKVERIFAKEFSYFLEEVGVSKEASCLIVGLGNWNVTPDALGPIVVENVLVTRHLFKLQPESVEEGFRPVSAIRPGVMGITGIETSDVIYGIIEKTKPDFVIAIDALAARSIERVNSTIQISDTGIHPGSGVGNKRKELSKETLGIPVIAIGVPTVVDAVSITSDTIDFILKHFGRELKEGNKPSRSLLPAGFTFGEKKKLTEEDMPDEKSRNMFLGAIGTLEEEEKRKLIYEVLSPLGHNLMVTPKEVDAFIEDMANVIASGLNAALHHQIDQDNTGAYTH.

Residues 1 to 15 constitute a propeptide that is removed on maturation; sequence MKEPLDLSKYSVRTD.

This sequence belongs to the peptidase A25 family. Homotetramer. In terms of processing, autoproteolytically processed. The inactive tetrameric zymogen termed p46 autoprocesses to a smaller form termed p41, which is active only during spore germination.

It catalyses the reaction Endopeptidase action with P4 Glu or Asp, P1 preferably Glu &gt; Asp, P1' hydrophobic and P2' Ala.. Functionally, initiates the rapid degradation of small, acid-soluble proteins during spore germination. The sequence is that of Germination protease from Bacillus mycoides (strain KBAB4) (Bacillus weihenstephanensis).